Here is a 240-residue protein sequence, read N- to C-terminus: Orotidine 5'-phosphate decarboxylase (240 aa).

Substrate is bound by residues D16, K37, 64-73 (DLKFHDIPTT), T128, R190, Q199, G219, and R220. The Proton donor role is filled by K66.

Belongs to the OMP decarboxylase family. Type 1 subfamily. In terms of assembly, homodimer.

The catalysed reaction is orotidine 5'-phosphate + H(+) = UMP + CO2. It participates in pyrimidine metabolism; UMP biosynthesis via de novo pathway; UMP from orotate: step 2/2. Functionally, catalyzes the decarboxylation of orotidine 5'-monophosphate (OMP) to uridine 5'-monophosphate (UMP). In Prochlorococcus marinus (strain SARG / CCMP1375 / SS120), this protein is Orotidine 5'-phosphate decarboxylase.